A 344-amino-acid polypeptide reads, in one-letter code: Lipase chaperone (344 aa).

The helical transmembrane segment at 14–34 (AVVYGAVGLAAIAGVAMWSGA) threads the bilayer. The disordered stretch occupies residues 37–78 (HGGTGASGEPPDASAARGPAAAPPQAAVPASTSLPPSLAGSS). Low complexity predominate over residues 43-78 (SGEPPDASAARGPAAAPPQAAVPASTSLPPSLAGSS).

This sequence belongs to the lipase chaperone family.

The protein resides in the cell inner membrane. Its function is as follows. May be involved in the folding of the extracellular lipase during its passage through the periplasm. This chain is Lipase chaperone (lifO), found in Burkholderia cepacia (Pseudomonas cepacia).